A 255-amino-acid polypeptide reads, in one-letter code: MKTWQYQYQLFCLAVSFFSRLPVPKSTPYSDERMNQAGRYFALVGTLLGLLCVLVYAFASLFFPYQVAIVLMMAFSLLLTGAFHEDGLTDMADGIGGGMTLDKRLTIMKDSRIGTYGSATLTMALIGKFVFLTTLARQPDFGLMIVVAYTLSRAVAATLIYDMPYVSDSDTSKSKPLANAQSSTELAILILTGVLAAISLGLGVGLLLILFAILFRWAFKRWLLARLGGFTGDCLGGAQQLMELGIYLVLIAVVQ.

Helical transmembrane passes span 43–63 (LVGT…SLFF), 64–84 (PYQV…GAFH), 113–133 (IGTY…VFLT), 141–161 (FGLM…TLIY), 195–215 (LAAI…AILF), and 234–254 (CLGG…IAVV).

This sequence belongs to the CobS family. Requires Mg(2+) as cofactor.

The protein localises to the cell inner membrane. It carries out the reaction alpha-ribazole + adenosylcob(III)inamide-GDP = adenosylcob(III)alamin + GMP + H(+). The enzyme catalyses alpha-ribazole 5'-phosphate + adenosylcob(III)inamide-GDP = adenosylcob(III)alamin 5'-phosphate + GMP + H(+). Its pathway is cofactor biosynthesis; adenosylcobalamin biosynthesis; adenosylcobalamin from cob(II)yrinate a,c-diamide: step 7/7. Functionally, joins adenosylcobinamide-GDP and alpha-ribazole to generate adenosylcobalamin (Ado-cobalamin). Also synthesizes adenosylcobalamin 5'-phosphate from adenosylcobinamide-GDP and alpha-ribazole 5'-phosphate. This chain is Adenosylcobinamide-GDP ribazoletransferase, found in Vibrio vulnificus (strain CMCP6).